The following is a 208-amino-acid chain: Large ribosomal subunit protein bL25 (208 aa).

This sequence belongs to the bacterial ribosomal protein bL25 family. CTC subfamily. Part of the 50S ribosomal subunit; part of the 5S rRNA/L5/L18/L25 subcomplex. Contacts the 5S rRNA. Binds to the 5S rRNA independently of L5 and L18.

In terms of biological role, this is one of the proteins that binds to the 5S RNA in the ribosome where it forms part of the central protuberance. This chain is Large ribosomal subunit protein bL25, found in Paracoccus denitrificans (strain Pd 1222).